Here is a 460-residue protein sequence, read N- to C-terminus: Cysteine--tRNA ligase (460 aa).

C28 is a binding site for Zn(2+). The 'HIGH' region motif lies at 30-40; that stretch reads VTIYDLCHIGH. Zn(2+)-binding residues include C209, H234, and E238. The 'KMSKS' region motif lies at 266–270; it reads KMSKS. K269 lines the ATP pocket.

Belongs to the class-I aminoacyl-tRNA synthetase family. Monomer. Requires Zn(2+) as cofactor.

It is found in the cytoplasm. It catalyses the reaction tRNA(Cys) + L-cysteine + ATP = L-cysteinyl-tRNA(Cys) + AMP + diphosphate. The sequence is that of Cysteine--tRNA ligase from Vibrio vulnificus (strain CMCP6).